The chain runs to 266 residues: Type III pantothenate kinase (266 aa).

11 to 18 contributes to the ATP binding site; the sequence is DIGNTSTV. A substrate-binding site is contributed by 111–114; that stretch reads GADR. Asp113 serves as the catalytic Proton acceptor. K(+) is bound at residue Asp135. Thr138 is an ATP binding site. Thr190 contacts substrate.

Belongs to the type III pantothenate kinase family. In terms of assembly, homodimer. NH4(+) serves as cofactor. It depends on K(+) as a cofactor.

The protein localises to the cytoplasm. It catalyses the reaction (R)-pantothenate + ATP = (R)-4'-phosphopantothenate + ADP + H(+). It functions in the pathway cofactor biosynthesis; coenzyme A biosynthesis; CoA from (R)-pantothenate: step 1/5. In terms of biological role, catalyzes the phosphorylation of pantothenate (Pan), the first step in CoA biosynthesis. The sequence is that of Type III pantothenate kinase from Deinococcus geothermalis (strain DSM 11300 / CIP 105573 / AG-3a).